The following is a 342-amino-acid chain: Methylthioribose-1-phosphate isomerase (342 aa).

Substrate is bound by residues 49–51, R86, and Q187; that span reads RGA. The active-site Proton donor is the D228. Position 238-239 (238-239) interacts with substrate; the sequence is NK.

Belongs to the eIF-2B alpha/beta/delta subunits family. MtnA subfamily.

It carries out the reaction 5-(methylsulfanyl)-alpha-D-ribose 1-phosphate = 5-(methylsulfanyl)-D-ribulose 1-phosphate. It functions in the pathway amino-acid biosynthesis; L-methionine biosynthesis via salvage pathway; L-methionine from S-methyl-5-thio-alpha-D-ribose 1-phosphate: step 1/6. Its function is as follows. Catalyzes the interconversion of methylthioribose-1-phosphate (MTR-1-P) into methylthioribulose-1-phosphate (MTRu-1-P). The sequence is that of Methylthioribose-1-phosphate isomerase from Serratia proteamaculans (strain 568).